A 31-amino-acid polypeptide reads, in one-letter code: Photosystem I reaction center subunit XII (31 aa).

The chain crosses the membrane as a helical span at residues 7-26 (QVYVALVIALLPAVLAFRLS).

Belongs to the PsaM family.

Its subcellular location is the cellular thylakoid membrane. This chain is Photosystem I reaction center subunit XII, found in Thermosynechococcus vestitus (strain NIES-2133 / IAM M-273 / BP-1).